The following is a 471-amino-acid chain: Probable ribonuclease FAU-1 (471 aa).

The protein belongs to the FAU-1 family.

In terms of biological role, probable RNase involved in rRNA stability through maturation and/or degradation of precursor rRNAs. Binds to RNA in loop regions with AU-rich sequences. This Thermococcus gammatolerans (strain DSM 15229 / JCM 11827 / EJ3) protein is Probable ribonuclease FAU-1.